Here is a 245-residue protein sequence, read N- to C-terminus: 23S rRNA (guanosine-2'-O-)-methyltransferase RlmB (245 aa).

Residues glycine 197, isoleucine 217, and leucine 226 each coordinate S-adenosyl-L-methionine.

It belongs to the class IV-like SAM-binding methyltransferase superfamily. RNA methyltransferase TrmH family. RlmB subfamily.

Its subcellular location is the cytoplasm. The enzyme catalyses guanosine(2251) in 23S rRNA + S-adenosyl-L-methionine = 2'-O-methylguanosine(2251) in 23S rRNA + S-adenosyl-L-homocysteine + H(+). Functionally, specifically methylates the ribose of guanosine 2251 in 23S rRNA. In Pasteurella multocida (strain Pm70), this protein is 23S rRNA (guanosine-2'-O-)-methyltransferase RlmB.